The primary structure comprises 754 residues: 1,4-alpha-glucan branching enzyme GlgB (754 aa).

Catalysis depends on aspartate 431, which acts as the Nucleophile. The Proton donor role is filled by glutamate 484.

Belongs to the glycosyl hydrolase 13 family. GlgB subfamily. Monomer.

It catalyses the reaction Transfers a segment of a (1-&gt;4)-alpha-D-glucan chain to a primary hydroxy group in a similar glucan chain.. It participates in glycan biosynthesis; glycogen biosynthesis. Functionally, catalyzes the formation of the alpha-1,6-glucosidic linkages in glycogen by scission of a 1,4-alpha-linked oligosaccharide from growing alpha-1,4-glucan chains and the subsequent attachment of the oligosaccharide to the alpha-1,6 position. The chain is 1,4-alpha-glucan branching enzyme GlgB from Prochlorococcus marinus (strain MIT 9515).